Here is a 319-residue protein sequence, read N- to C-terminus: ATP-dependent 6-phosphofructokinase (319 aa).

Position 11 (G11) interacts with ATP. An ADP-binding site is contributed by 21 to 25; it reads RAVAR. Residues 72–73 and 102–105 each bind ATP; these read RY and GDGS. Residue D103 coordinates Mg(2+). 125–127 contacts substrate; sequence TID. Residue D127 is the Proton acceptor of the active site. R154 provides a ligand contact to ADP. Substrate-binding positions include R162 and 169–171; that span reads MGR. ADP contacts are provided by residues 185-187 and R211; that span reads GAE. Substrate is bound by residues E222, R243, and 249–252; that span reads HIVR.

This sequence belongs to the phosphofructokinase type A (PFKA) family. ATP-dependent PFK group I subfamily. Prokaryotic clade 'B1' sub-subfamily. Homotetramer. The cofactor is Mg(2+).

Its subcellular location is the cytoplasm. The enzyme catalyses beta-D-fructose 6-phosphate + ATP = beta-D-fructose 1,6-bisphosphate + ADP + H(+). Its pathway is carbohydrate degradation; glycolysis; D-glyceraldehyde 3-phosphate and glycerone phosphate from D-glucose: step 3/4. Allosterically activated by ADP and other diphosphonucleosides, and allosterically inhibited by phosphoenolpyruvate. Its function is as follows. Catalyzes the phosphorylation of D-fructose 6-phosphate to fructose 1,6-bisphosphate by ATP, the first committing step of glycolysis. The chain is ATP-dependent 6-phosphofructokinase from Lacticaseibacillus casei (strain BL23) (Lactobacillus casei).